Here is an 80-residue protein sequence, read N- to C-terminus: Large ribosomal subunit protein bL31B (80 aa).

Belongs to the bacterial ribosomal protein bL31 family. Type B subfamily. In terms of assembly, part of the 50S ribosomal subunit.

This Streptococcus pneumoniae serotype 2 (strain D39 / NCTC 7466) protein is Large ribosomal subunit protein bL31B.